The primary structure comprises 287 residues: Deoxyuridine 5'-triphosphate nucleotidohydrolase (287 aa).

173–175 (RSG) contributes to the substrate binding site. A compositionally biased stretch (low complexity) spans 264–275 (SSSKDTSDSQMS). The segment at 264–287 (SSSKDTSDSQMSRGDAGLGSSGLM) is disordered.

It belongs to the dUTPase family. Requires Mg(2+) as cofactor.

The enzyme catalyses dUTP + H2O = dUMP + diphosphate + H(+). Involved in nucleotide metabolism: produces dUMP, the immediate precursor of thymidine nucleotides and decreases the intracellular concentration of dUTP to avoid uracil incorporation into viral DNA. The chain is Deoxyuridine 5'-triphosphate nucleotidohydrolase from Saimiriine herpesvirus 2 (strain 11) (SaHV-2).